The sequence spans 545 residues: Carboxypeptidase Y homolog A (545 aa).

The signal sequence occupies residues 1–17 (MKSLALALLVGGAIAAG). A propeptide spanning residues 18–123 (PQQQVLQAPV…KLEAYDLRVK (106 aa)) is cleaved from the precursor. Intrachain disulfides connect Cys177-Cys416, Cys311-Cys325, Cys335-Cys358, Cys342-Cys351, and Cys380-Cys386. Asn208 is a glycosylation site (N-linked (GlcNAc...) asparagine). Ser264 is an active-site residue. The active site involves Asp455. Residues Asn485, Asn491, and Asn506 are each glycosylated (N-linked (GlcNAc...) asparagine). His517 is a catalytic residue.

Belongs to the peptidase S10 family.

Its subcellular location is the vacuole. It catalyses the reaction Release of a C-terminal amino acid with broad specificity.. In terms of biological role, vacuolar carboxypeptidase involved in degradation of small peptides. Digests preferentially peptides containing an aliphatic or hydrophobic residue in P1' position, as well as methionine, leucine or phenylalanine in P1 position of ester substrate. This is Carboxypeptidase Y homolog A (CPYA) from Ajellomyces dermatitidis (strain ER-3 / ATCC MYA-2586) (Blastomyces dermatitidis).